The sequence spans 218 residues: NAD(P)H-quinone oxidoreductase subunit I (218 aa).

2 4Fe-4S ferredoxin-type domains span residues 55-84 (GRIH…VDWV) and 95-124 (RNYS…MTEE). Positions 64, 67, 70, 74, 104, 107, 110, and 114 each coordinate [4Fe-4S] cluster. Residues 192–218 (LSLQQDSLQGDEGESLQDAPDQDQPKG) are disordered.

This sequence belongs to the complex I 23 kDa subunit family. In terms of assembly, NDH-1 is composed of at least 11 different subunits. The cofactor is [4Fe-4S] cluster.

It localises to the cellular thylakoid membrane. It carries out the reaction a plastoquinone + NADH + (n+1) H(+)(in) = a plastoquinol + NAD(+) + n H(+)(out). It catalyses the reaction a plastoquinone + NADPH + (n+1) H(+)(in) = a plastoquinol + NADP(+) + n H(+)(out). In terms of biological role, NDH-1 shuttles electrons from an unknown electron donor, via FMN and iron-sulfur (Fe-S) centers, to quinones in the respiratory and/or the photosynthetic chain. The immediate electron acceptor for the enzyme in this species is believed to be plastoquinone. Couples the redox reaction to proton translocation, and thus conserves the redox energy in a proton gradient. The sequence is that of NAD(P)H-quinone oxidoreductase subunit I from Prochlorococcus marinus (strain MIT 9303).